We begin with the raw amino-acid sequence, 275 residues long: uncharacterized protein (275 aa).

Position 45 (D45) interacts with NADPH. Active-site proton donor residues include Y50 and H111. S139, Q162, L191, K196, S232, S233, and R237 together coordinate NADPH.

Belongs to the aldo/keto reductase family.

Its subcellular location is the cytoplasm. The protein localises to the nucleus. This is an uncharacterized protein from Schizosaccharomyces pombe (strain 972 / ATCC 24843) (Fission yeast).